A 411-amino-acid chain; its full sequence is Glutamate dehydrogenase 1, mitochondrial (411 aa).

Residues 1-18 constitute a mitochondrion transit peptide; the sequence is MNALAATSRNFKQAAKLL. Residue Lys102 is part of the active site.

Belongs to the Glu/Leu/Phe/Val dehydrogenases family.

Its subcellular location is the mitochondrion. The enzyme catalyses L-glutamate + NAD(+) + H2O = 2-oxoglutarate + NH4(+) + NADH + H(+). It catalyses the reaction L-glutamate + NADP(+) + H2O = 2-oxoglutarate + NH4(+) + NADPH + H(+). The sequence is that of Glutamate dehydrogenase 1, mitochondrial (GDH1) from Oryza sativa subsp. indica (Rice).